A 212-amino-acid polypeptide reads, in one-letter code: Ribosomal RNA large subunit methyltransferase E (212 aa).

The interval 1–26 (MPAERPSVSQKPKNPYKRPDAFTKAA) is disordered. The S-adenosyl-L-methionine site is built by glycine 63, tryptophan 65, aspartate 83, aspartate 101, and aspartate 122. The active-site Proton acceptor is lysine 162.

Belongs to the class I-like SAM-binding methyltransferase superfamily. RNA methyltransferase RlmE family.

The protein localises to the cytoplasm. The enzyme catalyses uridine(2552) in 23S rRNA + S-adenosyl-L-methionine = 2'-O-methyluridine(2552) in 23S rRNA + S-adenosyl-L-homocysteine + H(+). Specifically methylates the uridine in position 2552 of 23S rRNA at the 2'-O position of the ribose in the fully assembled 50S ribosomal subunit. The polypeptide is Ribosomal RNA large subunit methyltransferase E (Sorangium cellulosum (strain So ce56) (Polyangium cellulosum (strain So ce56))).